The sequence spans 572 residues: Cell cycle protein kinase DBF2 (572 aa).

Phosphoserine occurs at positions 17, 20, and 74. One can recognise a Protein kinase domain in the interval 177–477 (FEMITQVGQG…FEHVKRMSYF (301 aa)). ATP contacts are provided by residues 183 to 191 (VGQGGYGQV) and Lys-206. The active-site Proton acceptor is the Asp-300. Position 374 is a phosphoserine; by CDC15 (Ser-374). The AGC-kinase C-terminal domain occupies 478–555 (ADINFSTLRS…RHRNGKQGSS (78 aa)). Phosphothreonine; by CDC15 is present on Thr-544.

It belongs to the protein kinase superfamily. Ser/Thr protein kinase family. As to quaternary structure, interacts with MOB1. MOB1-binding is required for a late mitotic event. In terms of processing, phosphorylation of Ser-374 and Thr-544 by CDC15 is essential for activation of DBF2 kinase activity.

Its subcellular location is the cytoplasm. The protein localises to the cytoskeleton. It is found in the microtubule organizing center. The protein resides in the spindle pole body. It localises to the bud neck. Its subcellular location is the nucleus. The catalysed reaction is L-seryl-[protein] + ATP = O-phospho-L-seryl-[protein] + ADP + H(+). It catalyses the reaction L-threonyl-[protein] + ATP = O-phospho-L-threonyl-[protein] + ADP + H(+). Kinase activity is regulated by BUB2, CDC15 and CDC5, and is maximal during nuclear division. CDK1 kinase inhibits cellular DBF2-MOB1 kinase activity via phosphorylation of both CDC15 and MOB1. Functionally, ser/Thr-protein kinase involved in the mitotic exit network (MEN) and required after the metaphase to anaphase cell cycle transition. Phosphorylates CHS2 to regulate its dynamics and chitin synthesis at the division site during cytokinesis. Coordinates septin and actomyosin ring (AMR) functions during cytokinesis through the phosphorylation of HOF1. In complex with MOB1, phosphorylates CDC14 at sites adjacent to its nuclear localization sequence, thereby retaining CDC14 in the cytoplasm. Also binds to SWI5 and CLB2 mRNAs cotranscriptionally to regulate their decay. In the nucleus, the DBF2-MOB1 complex regulates passenger protein localization during anaphase. Mediates sorbic acid stress tolerance through promoting vacuolar H(+)-ATPase function, probably through phosphorylation of VMA1 and VMA2 subunits. The chain is Cell cycle protein kinase DBF2 (DBF2) from Saccharomyces cerevisiae (strain ATCC 204508 / S288c) (Baker's yeast).